The chain runs to 269 residues: uncharacterized protein (269 aa).

This sequence to T.pallidum TP0678.

This is an uncharacterized protein from Borreliella burgdorferi (strain ATCC 35210 / DSM 4680 / CIP 102532 / B31) (Borrelia burgdorferi).